A 314-amino-acid polypeptide reads, in one-letter code: 4-hydroxy-3-methylbut-2-enyl diphosphate reductase (314 aa).

[4Fe-4S] cluster is bound at residue Cys-12. (2E)-4-hydroxy-3-methylbut-2-enyl diphosphate is bound by residues His-41 and His-74. Residues His-41 and His-74 each contribute to the dimethylallyl diphosphate site. Isopentenyl diphosphate-binding residues include His-41 and His-74. Cys-96 is a binding site for [4Fe-4S] cluster. Residue His-124 coordinates (2E)-4-hydroxy-3-methylbut-2-enyl diphosphate. Position 124 (His-124) interacts with dimethylallyl diphosphate. His-124 lines the isopentenyl diphosphate pocket. Residue Glu-126 is the Proton donor of the active site. Thr-167 contributes to the (2E)-4-hydroxy-3-methylbut-2-enyl diphosphate binding site. Cys-197 serves as a coordination point for [4Fe-4S] cluster. (2E)-4-hydroxy-3-methylbut-2-enyl diphosphate is bound by residues Ser-225, Ser-226, Asn-227, and Ser-269. 4 residues coordinate dimethylallyl diphosphate: Ser-225, Ser-226, Asn-227, and Ser-269. Residues Ser-225, Ser-226, Asn-227, and Ser-269 each coordinate isopentenyl diphosphate.

Belongs to the IspH family. It depends on [4Fe-4S] cluster as a cofactor.

It catalyses the reaction isopentenyl diphosphate + 2 oxidized [2Fe-2S]-[ferredoxin] + H2O = (2E)-4-hydroxy-3-methylbut-2-enyl diphosphate + 2 reduced [2Fe-2S]-[ferredoxin] + 2 H(+). The catalysed reaction is dimethylallyl diphosphate + 2 oxidized [2Fe-2S]-[ferredoxin] + H2O = (2E)-4-hydroxy-3-methylbut-2-enyl diphosphate + 2 reduced [2Fe-2S]-[ferredoxin] + 2 H(+). Its pathway is isoprenoid biosynthesis; dimethylallyl diphosphate biosynthesis; dimethylallyl diphosphate from (2E)-4-hydroxy-3-methylbutenyl diphosphate: step 1/1. It functions in the pathway isoprenoid biosynthesis; isopentenyl diphosphate biosynthesis via DXP pathway; isopentenyl diphosphate from 1-deoxy-D-xylulose 5-phosphate: step 6/6. Its function is as follows. Catalyzes the conversion of 1-hydroxy-2-methyl-2-(E)-butenyl 4-diphosphate (HMBPP) into a mixture of isopentenyl diphosphate (IPP) and dimethylallyl diphosphate (DMAPP). Acts in the terminal step of the DOXP/MEP pathway for isoprenoid precursor biosynthesis. The chain is 4-hydroxy-3-methylbut-2-enyl diphosphate reductase from Haemophilus influenzae (strain PittEE).